Reading from the N-terminus, the 286-residue chain is Homoserine kinase (286 aa).

78-88 (PLARGLGSSSS) contacts ATP.

This sequence belongs to the GHMP kinase family. Homoserine kinase subfamily.

The protein localises to the cytoplasm. It catalyses the reaction L-homoserine + ATP = O-phospho-L-homoserine + ADP + H(+). Its pathway is amino-acid biosynthesis; L-threonine biosynthesis; L-threonine from L-aspartate: step 4/5. Its function is as follows. Catalyzes the ATP-dependent phosphorylation of L-homoserine to L-homoserine phosphate. This Streptococcus thermophilus (strain CNRZ 1066) protein is Homoserine kinase.